A 366-amino-acid chain; its full sequence is tRNA(Met) cytidine acetate ligase (366 aa).

Residues 7–20 (IAEF…HKYL), glycine 96, asparagine 152, and arginine 175 contribute to the ATP site.

Belongs to the TmcAL family.

It localises to the cytoplasm. The catalysed reaction is cytidine(34) in elongator tRNA(Met) + acetate + ATP = N(4)-acetylcytidine(34) in elongator tRNA(Met) + AMP + diphosphate. In terms of biological role, catalyzes the formation of N(4)-acetylcytidine (ac(4)C) at the wobble position of elongator tRNA(Met), using acetate and ATP as substrates. First activates an acetate ion to form acetyladenylate (Ac-AMP) and then transfers the acetyl group to tRNA to form ac(4)C34. The chain is tRNA(Met) cytidine acetate ligase from Streptococcus mutans serotype c (strain ATCC 700610 / UA159).